The primary structure comprises 127 residues: Large ribosomal subunit protein bL12 (127 aa).

Residues 96–127 (GTPSTLKEAVSKDDAEEAAKQLKEAGAEVEVK) are disordered. The span at 104-127 (AVSKDDAEEAAKQLKEAGAEVEVK) shows a compositional bias: basic and acidic residues.

The protein belongs to the bacterial ribosomal protein bL12 family. In terms of assembly, homodimer. Part of the ribosomal stalk of the 50S ribosomal subunit. Forms a multimeric L10(L12)X complex, where L10 forms an elongated spine to which 2 to 4 L12 dimers bind in a sequential fashion. Binds GTP-bound translation factors.

Forms part of the ribosomal stalk which helps the ribosome interact with GTP-bound translation factors. Is thus essential for accurate translation. This chain is Large ribosomal subunit protein bL12, found in Oleidesulfovibrio alaskensis (strain ATCC BAA-1058 / DSM 17464 / G20) (Desulfovibrio alaskensis).